Reading from the N-terminus, the 171-residue chain is 3-hydroxydecanoyl-[acyl-carrier-protein] dehydratase (171 aa).

His-70 is an active-site residue.

Belongs to the thioester dehydratase family. FabA subfamily. Homodimer.

It is found in the cytoplasm. The enzyme catalyses a (3R)-hydroxyacyl-[ACP] = a (2E)-enoyl-[ACP] + H2O. It catalyses the reaction (3R)-hydroxydecanoyl-[ACP] = (2E)-decenoyl-[ACP] + H2O. It carries out the reaction (2E)-decenoyl-[ACP] = (3Z)-decenoyl-[ACP]. It functions in the pathway lipid metabolism; fatty acid biosynthesis. Functionally, necessary for the introduction of cis unsaturation into fatty acids. Catalyzes the dehydration of (3R)-3-hydroxydecanoyl-ACP to E-(2)-decenoyl-ACP and then its isomerization to Z-(3)-decenoyl-ACP. Can catalyze the dehydratase reaction for beta-hydroxyacyl-ACPs with saturated chain lengths up to 16:0, being most active on intermediate chain length. The sequence is that of 3-hydroxydecanoyl-[acyl-carrier-protein] dehydratase from Histophilus somni (strain 129Pt) (Haemophilus somnus).